The following is a 217-amino-acid chain: Large ribosomal subunit protein uL29m (217 aa).

This sequence belongs to the universal ribosomal protein uL29 family. Component of the mitochondrial large ribosomal subunit. Mature mitochondrial ribosomes consist of a small (37S) and a large (54S) subunit. The 37S subunit contains at least 33 different proteins and 1 molecule of RNA (15S). The 54S subunit contains at least 45 different proteins and 1 molecule of RNA (21S).

The protein resides in the mitochondrion. This chain is Large ribosomal subunit protein uL29m (mrpl4), found in Neosartorya fischeri (strain ATCC 1020 / DSM 3700 / CBS 544.65 / FGSC A1164 / JCM 1740 / NRRL 181 / WB 181) (Aspergillus fischerianus).